A 322-amino-acid polypeptide reads, in one-letter code: D-specific alpha-keto acid dehydrogenase (322 aa).

Residues 156 to 157 (QI), 229 to 231 (TGR), and Asp255 contribute to the NAD(+) site. The active site involves Arg231. The active site involves Glu260. Residue His292 is the Proton donor of the active site. 292 to 295 (HTAY) is an NAD(+) binding site.

It belongs to the D-isomer specific 2-hydroxyacid dehydrogenase family.

It catalyses the reaction a (2R)-2-hydroxycarboxylate + NADP(+) = a 2-oxocarboxylate + NADPH + H(+). The enzyme catalyses a (2R)-2-hydroxycarboxylate + NAD(+) = a 2-oxocarboxylate + NADH + H(+). It carries out the reaction (R)-lactate + NADP(+) = pyruvate + NADPH + H(+). The catalysed reaction is (R)-lactate + NAD(+) = pyruvate + NADH + H(+). It catalyses the reaction (2R)-hydroxybutanoate + NADP(+) = 2-oxobutanoate + NADPH + H(+). Required for high-level resistance to glycopeptide antibiotics. Catalyzes the reduction of 2-keto acids to 2-D-hydroxy acids, exhibiting highest catalytic efficiency with pyruvate and 2-oxobutanoate/alpha-ketobutyrate as substrates, producing D-lactate and (2R)-hydroxybutanoate, respectively. Together with D-alanine--D-lactate ligase VanA, gives rise to peptidoglycan precursors that terminate in the depsipeptide D-alanine-D-lactate rather than the dipeptide D-alanine-D-alanine thus preventing vancomycin binding. Shows a slight preference for NADPH over NADH as the electron donor. This Enterococcus faecium (Streptococcus faecium) protein is D-specific alpha-keto acid dehydrogenase.